The chain runs to 199 residues: Protein GrpE (199 aa).

A compositionally biased stretch (basic and acidic residues) spans 1–10 (MTNQTEKEQV). Positions 1-44 (MTNQTEKEQVEQDVSQATELAQEAQEAQTQDVEPELQQNNEIDP) are disordered. Residues 16 to 30 (QATELAQEAQEAQTQ) show a composition bias toward low complexity.

Belongs to the GrpE family. Homodimer.

It is found in the cytoplasm. Participates actively in the response to hyperosmotic and heat shock by preventing the aggregation of stress-denatured proteins, in association with DnaK and GrpE. It is the nucleotide exchange factor for DnaK and may function as a thermosensor. Unfolded proteins bind initially to DnaJ; upon interaction with the DnaJ-bound protein, DnaK hydrolyzes its bound ATP, resulting in the formation of a stable complex. GrpE releases ADP from DnaK; ATP binding to DnaK triggers the release of the substrate protein, thus completing the reaction cycle. Several rounds of ATP-dependent interactions between DnaJ, DnaK and GrpE are required for fully efficient folding. The chain is Protein GrpE from Glaesserella parasuis serovar 5 (strain SH0165) (Haemophilus parasuis).